Consider the following 279-residue polypeptide: Shikimate dehydrogenase (NADP(+)) (279 aa).

Residues 20-22 (SRS) and Thr67 each bind shikimate. The active-site Proton acceptor is Lys71. Asp83 is an NADP(+) binding site. 2 residues coordinate shikimate: Asn92 and Asp108. Residues 134–138 (GAGGA) and Leu223 each bind NADP(+). Shikimate is bound at residue Tyr225. Gly246 provides a ligand contact to NADP(+).

This sequence belongs to the shikimate dehydrogenase family. Homodimer.

The enzyme catalyses shikimate + NADP(+) = 3-dehydroshikimate + NADPH + H(+). It functions in the pathway metabolic intermediate biosynthesis; chorismate biosynthesis; chorismate from D-erythrose 4-phosphate and phosphoenolpyruvate: step 4/7. In terms of biological role, involved in the biosynthesis of the chorismate, which leads to the biosynthesis of aromatic amino acids. Catalyzes the reversible NADPH linked reduction of 3-dehydroshikimate (DHSA) to yield shikimate (SA). In Cereibacter sphaeroides (strain ATCC 17023 / DSM 158 / JCM 6121 / CCUG 31486 / LMG 2827 / NBRC 12203 / NCIMB 8253 / ATH 2.4.1.) (Rhodobacter sphaeroides), this protein is Shikimate dehydrogenase (NADP(+)).